Consider the following 357-residue polypeptide: Protein RecA (357 aa).

67-74 contributes to the ATP binding site; it reads GPESSGKT. Positions 332 to 357 are disordered; the sequence is PSAMSSSSSDDENSEGNVDFETGEVF.

This sequence belongs to the RecA family.

The protein localises to the cytoplasm. Its function is as follows. Can catalyze the hydrolysis of ATP in the presence of single-stranded DNA, the ATP-dependent uptake of single-stranded DNA by duplex DNA, and the ATP-dependent hybridization of homologous single-stranded DNAs. It interacts with LexA causing its activation and leading to its autocatalytic cleavage. This chain is Protein RecA, found in Shewanella sp. (strain ANA-3).